Reading from the N-terminus, the 112-residue chain is MGLKSYLLGRNGEKRAEAFLIKNGFTIREKNFHSRFGEIDIIAQKDGILHFIEVKLSEKSDPVYMITQKKMEKLLLAIEFYMMKNGLELPYQIDGVLIKKNTLEMIENLTIM.

The protein belongs to the UPF0102 family.

The sequence is that of UPF0102 protein NIS_1551 from Nitratiruptor sp. (strain SB155-2).